The chain runs to 597 residues: Putative heat shock protein HSP 90-beta-3 (597 aa).

ATP contacts are provided by Asn-46, Asp-88, and Lys-107. Residues 201–241 form a disordered region; sequence DKEISDDEAEEEKGEKEEEDKDDEEKPKIKDVGSDEEDDSK. Acidic residues predominate over residues 204–223; sequence ISDDEAEEEKGEKEEEDKDD. The segment covering 224 to 233 has biased composition (basic and acidic residues); sequence EEKPKIKDVG. Arg-334 contributes to the ATP binding site. Residues 414 to 446 are a coiled coil; sequence LELPEDEEEKKKMEESKEKFENLCKLMKEILDK. Residues 564-578 are compositionally biased toward acidic residues; it reads DEDEVAAEEPSDAVP. The segment at 564 to 597 is disordered; sequence DEDEVAAEEPSDAVPDEIPPLEGDEDASRMEEVD. A TPR repeat-binding motif is present at residues 593–597; sequence MEEVD.

This sequence belongs to the heat shock protein 90 family. As to quaternary structure, homodimer.

The protein localises to the cytoplasm. Functionally, putative molecular chaperone that may promote the maturation, structural maintenance and proper regulation of specific target proteins. The chain is Putative heat shock protein HSP 90-beta-3 (HSP90AB3P) from Homo sapiens (Human).